The primary structure comprises 356 residues: tRNA-specific 2-thiouridylase MnmA (356 aa).

Residues 6–13 (AMSGGVDS) and leucine 32 each bind ATP. The Nucleophile role is filled by cysteine 101. Cysteine 101 and cysteine 193 are disulfide-bonded. An ATP-binding site is contributed by glycine 125. Residues 143 to 145 (KDQ) are interaction with tRNA. The active-site Cysteine persulfide intermediate is cysteine 193.

It belongs to the MnmA/TRMU family.

The protein localises to the cytoplasm. The enzyme catalyses S-sulfanyl-L-cysteinyl-[protein] + uridine(34) in tRNA + AH2 + ATP = 2-thiouridine(34) in tRNA + L-cysteinyl-[protein] + A + AMP + diphosphate + H(+). In terms of biological role, catalyzes the 2-thiolation of uridine at the wobble position (U34) of tRNA, leading to the formation of s(2)U34. The sequence is that of tRNA-specific 2-thiouridylase MnmA from Mycolicibacterium smegmatis (strain ATCC 700084 / mc(2)155) (Mycobacterium smegmatis).